Here is a 348-residue protein sequence, read N- to C-terminus: Sulfate/thiosulfate import ATP-binding protein CysA (348 aa).

The 235-residue stretch at 3 to 237 (IEIRNITKSF…PATPFVCQFI (235 aa)) folds into the ABC transporter domain. Residue 35-42 (GPSGCGKT) participates in ATP binding.

This sequence belongs to the ABC transporter superfamily. Sulfate/tungstate importer (TC 3.A.1.6) family. In terms of assembly, the complex is composed of two ATP-binding proteins (CysA), two transmembrane proteins (CysT and CysW) and a solute-binding protein (CysP).

It is found in the cell inner membrane. The catalysed reaction is sulfate(out) + ATP + H2O = sulfate(in) + ADP + phosphate + H(+). It catalyses the reaction thiosulfate(out) + ATP + H2O = thiosulfate(in) + ADP + phosphate + H(+). Functionally, part of the ABC transporter complex CysAWTP involved in sulfate/thiosulfate import. Responsible for energy coupling to the transport system. This Methylococcus capsulatus (strain ATCC 33009 / NCIMB 11132 / Bath) protein is Sulfate/thiosulfate import ATP-binding protein CysA.